A 369-amino-acid polypeptide reads, in one-letter code: Pulmonary surfactant-associated protein D (369 aa).

A signal peptide spans 1–20 (MLLLPLSVLLLLTQPWRSLG). 2 positions are modified to S-nitrosocysteine: C35 and C40. Residues 41-215 (SPPEDGLPGR…ERGAKGESGL (175 aa)) form a disordered region. One can recognise a Collagen-like domain in the interval 46–216 (GLPGRDGRDG…RGAKGESGLA (171 aa)). Positions 47-65 (LPGRDGRDGREGPRGEKGD) are enriched in basic and acidic residues. P78 bears the 4-hydroxyproline mark. A 5-hydroxylysine modification is found at K87. The N-linked (GlcNAc...) asparagine glycan is linked to N90. At P96 the chain carries 4-hydroxyproline. K99 carries the 5-hydroxylysine modification. Residues 139-148 (GPKGGVGAPG) are compositionally biased toward gly residues. 4-hydroxyproline is present on residues P165 and P171. The segment covering 165–191 (PGEPGAPGRAGAPGPAGAIGPQGPSGA) has biased composition (low complexity). The span at 198-210 (KGDRGTPGERGAK) shows a compositional bias: basic and acidic residues. Positions 217 to 248 (EVNALRQRVGILEGQLQRLQNAFSQYKKAMLF) form a coiled coil. One can recognise a C-type lectin domain in the interval 254-369 (VGEKIFKTEG…GEQRLVICEF (116 aa)). Cystine bridges form between C275–C367 and C345–C359.

This sequence belongs to the SFTPD family. In terms of assembly, oligomeric complex of 4 set of homotrimers. In terms of processing, hydroxylation on proline residues within the sequence motif, GXPG, is most likely to be 4-hydroxy as this fits the requirement for 4-hydroxylation in vertebrates. Post-translationally, S-nitrosylation at Cys-35 and Cys-40 alters the quaternary structure which results in a pro-inflammatory chemoattractive signaling activity with macrophages.

The protein localises to the secreted. Its subcellular location is the extracellular space. It is found in the extracellular matrix. It localises to the surface film. Contributes to the lung's defense against inhaled microorganisms, organic antigens and toxins. Interacts with compounds such as bacterial lipopolysaccharides, oligosaccharides and fatty acids and modulates leukocyte action in immune response. May participate in the extracellular reorganization or turnover of pulmonary surfactant. Binds strongly maltose residues and to a lesser extent other alpha-glucosyl moieties. This is Pulmonary surfactant-associated protein D (SFTPD) from Bos taurus (Bovine).